The sequence spans 305 residues: MVAIIVHGGAGTIKKEERIPKVIEGVKEAVIVGWKELRKGSALDAVEEAIKVLEDNPIFNAGTGSVLTIDGKVEMDAAIMRGKTLEAGAVAGIWGVKNPISVARKVMEKTDHVLLVGEGAVKFARLMGFPEYNPITEERIEQWKELKEKLMKGEIKYWKKLGELIKEYPEVLRSTVGAVAFDGEEIVAGTSTGGVFLKMFGRVGDTPIIGAGTYANEVAGASCTGLGEVAIRLALAKTATDFVRLGMDAQAASNAAISLATKYFGKDTMGIIMVDAAGNVGFAKNTKHMSYAYMKDGMEEPEAGV.

T175 acts as the Nucleophile in catalysis. Substrate contacts are provided by residues 202–205 (RVGD) and 224–227 (TGLG).

The protein belongs to the Ntn-hydrolase family. In terms of assembly, heterotetramer of two alpha and two beta chains arranged as a dimer of alpha/beta heterodimers. Post-translationally, autocleaved. Generates the alpha and beta subunits. The N-terminal residue of the beta subunit is thought to be responsible for the nucleophile hydrolase activity.

It carries out the reaction L-asparagine + H2O = L-aspartate + NH4(+). Catalyzes the hydrolysis of L-asparagine into L-aspartate and ammonia. The sequence is that of Plant-type L-asparaginase from Pyrococcus horikoshii (strain ATCC 700860 / DSM 12428 / JCM 9974 / NBRC 100139 / OT-3).